Reading from the N-terminus, the 270-residue chain is tRNA pseudouridine synthase A (270 aa).

The active-site Nucleophile is the Asp-51. Tyr-109 is a substrate binding site.

The protein belongs to the tRNA pseudouridine synthase TruA family. In terms of assembly, homodimer.

It catalyses the reaction uridine(38/39/40) in tRNA = pseudouridine(38/39/40) in tRNA. Formation of pseudouridine at positions 38, 39 and 40 in the anticodon stem and loop of transfer RNAs. This Burkholderia lata (strain ATCC 17760 / DSM 23089 / LMG 22485 / NCIMB 9086 / R18194 / 383) protein is tRNA pseudouridine synthase A.